A 328-amino-acid chain; its full sequence is MDATLLLNVEGIKKTILHGGTGDLPNFITGARVTFHFRTMKCDEERTVIDDSKQVGHPMHIIIGNMFKLEVWEILLTSMRVSEVAEFWCDTIHTGVYPILSRSLRQMAEGKDPTEWHVHTCGLANMFAYHTLGYEDLDELQKEPQPLIFIIELLQVEAPSQYQRETWNLNNQEKMQAVPILHGEGNRLFKLGRYEEASNKYQEAIVCLRNLQTKEKPWEVQWLKLEKMINTLILNYCQCLLKKEEYYEVLEHTSDILRHHPGIVKAYYVRARAHAEVWNEAEAKADLEKVLELEPSMRKAVQRELRLLENRLEEKREEERLRCRNMLG.

The PPIase FKBP-type domain occupies 53-145 (KQVGHPMHII…DLDELQKEPQ (93 aa)). TPR repeat units lie at residues 178–211 (VPIL…LRNL), 230–263 (NTLI…HPGI), and 264–297 (VKAY…EPSM).

Directly interacts with NUB1.

It is found in the cytoplasm. Its subcellular location is the nucleus. May be important in protein trafficking and/or protein folding and stabilization. The sequence is that of Aryl-hydrocarbon-interacting protein-like 1 (AIPL1) from Bos taurus (Bovine).